Reading from the N-terminus, the 405-residue chain is 4-hydroxy-3-methylbut-2-en-1-yl diphosphate synthase (flavodoxin) (405 aa).

The [4Fe-4S] cluster site is built by Cys-297, Cys-300, Cys-343, and Glu-350.

Belongs to the IspG family. [4Fe-4S] cluster serves as cofactor.

It carries out the reaction (2E)-4-hydroxy-3-methylbut-2-enyl diphosphate + oxidized [flavodoxin] + H2O + 2 H(+) = 2-C-methyl-D-erythritol 2,4-cyclic diphosphate + reduced [flavodoxin]. It functions in the pathway isoprenoid biosynthesis; isopentenyl diphosphate biosynthesis via DXP pathway; isopentenyl diphosphate from 1-deoxy-D-xylulose 5-phosphate: step 5/6. Converts 2C-methyl-D-erythritol 2,4-cyclodiphosphate (ME-2,4cPP) into 1-hydroxy-2-methyl-2-(E)-butenyl 4-diphosphate. This chain is 4-hydroxy-3-methylbut-2-en-1-yl diphosphate synthase (flavodoxin), found in Francisella tularensis subsp. tularensis (strain FSC 198).